A 596-amino-acid chain; its full sequence is Nitrite reductase (596 aa).

An N-terminal signal peptide occupies residues 1-29 (MRQRTPFARPGLLASAALALVLGPLAASA). The interval 30–76 (QEQVAPPKDPAAALEDHKTRTDNRYEPSLDNLAQQDVAAPGAPEGVS) is N-terminal tail. Residue histidine 46 participates in heme c binding. 2 residues coordinate heme d1: tyrosine 54 and serine 57. In terms of domain architecture, Cytochrome c spans 77 to 162 (ALSDAQYNEA…ANYLLLDPAA (86 aa)). The heme c site is built by cysteine 94, cysteine 97, histidine 98, lysine 108, and tyrosine 122. Residues tryptophan 138, arginine 203, histidine 229, arginine 232, arginine 245, arginine 272, tyrosine 292, arginine 420, glutamine 536, and threonine 583 each coordinate heme d1. Residues 163–596 (PPEFGMKEMR…NVYNTMTDTY (434 aa)) form a D1-heme domain region.

In terms of assembly, homodimer. It depends on heme c as a cofactor. Requires heme as cofactor.

It localises to the periplasm. The enzyme catalyses nitric oxide + Fe(III)-[cytochrome c] + H2O = Fe(II)-[cytochrome c] + nitrite + 2 H(+). It catalyses the reaction A + NH4(+) + H2O = hydroxylamine + AH2 + H(+). In Paracoccus pantotrophus (Thiosphaera pantotropha), this protein is Nitrite reductase (nirS).